We begin with the raw amino-acid sequence, 291 residues long: Bifunctional protein FolD (291 aa).

Residues 173–175 and serine 198 contribute to the NADP(+) site; that span reads GRS.

This sequence belongs to the tetrahydrofolate dehydrogenase/cyclohydrolase family. As to quaternary structure, homodimer.

The enzyme catalyses (6R)-5,10-methylene-5,6,7,8-tetrahydrofolate + NADP(+) = (6R)-5,10-methenyltetrahydrofolate + NADPH. It carries out the reaction (6R)-5,10-methenyltetrahydrofolate + H2O = (6R)-10-formyltetrahydrofolate + H(+). It participates in one-carbon metabolism; tetrahydrofolate interconversion. Catalyzes the oxidation of 5,10-methylenetetrahydrofolate to 5,10-methenyltetrahydrofolate and then the hydrolysis of 5,10-methenyltetrahydrofolate to 10-formyltetrahydrofolate. This is Bifunctional protein FolD from Psychrobacter sp. (strain PRwf-1).